The chain runs to 426 residues: uncharacterized protein (426 aa).

It belongs to the serpin family.

This is an uncharacterized protein from Methanosarcina acetivorans (strain ATCC 35395 / DSM 2834 / JCM 12185 / C2A).